The following is a 356-amino-acid chain: Carbohydrate sulfotransferase 10 (356 aa).

The Cytoplasmic portion of the chain corresponds to 1-6 (MHHQWL). The helical; Signal-anchor for type II membrane protein transmembrane segment at 7-27 (LLAACFWVIFMFMVASKFITL) threads the bilayer. Residues 28–356 (TFKDPDGYSA…GYQKPDFLLN (329 aa)) are Lumenal-facing. The N-linked (GlcNAc...) asparagine glycan is linked to Asn-99. 3'-phosphoadenylyl sulfate-binding positions include 127–133 (PKVGNTQ) and 189–197 (RDPFERLIS). Residues Asn-228 and Asn-316 are each glycosylated (N-linked (GlcNAc...) asparagine).

Belongs to the sulfotransferase 2 family. In myogenic progenitors, it is ubiquitously expressed.

It localises to the golgi apparatus membrane. The enzyme catalyses 3-O-{beta-D-GlcA-(1-&gt;[3)-alpha-D-Xyl-(1-&gt;3)-beta-D-GlcA-(1-&gt;](n)-4)-beta-D-Xyl-(1-&gt;4)-Rib-ol-P-Rib-ol-P-3-beta-D-GalNAc-(1-&gt;3)-beta-D-GlcNAc-(1-&gt;4)-O-6-P-alpha-D-Man}-L-Thr-[protein] + 3'-phosphoadenylyl sulfate = 3-O-{O-3-S-beta-D-GlcA-(1-&gt;[3)-alpha-D-Xyl-(1-&gt;3)-beta-D-GlcA-(1-&gt;](n)-4)-beta-D-Xyl-(1-&gt;4)-Rib-ol-P-Rib-ol-P-3-beta-D-GalNAc-(1-&gt;3)-beta-D-GlcNAc-(1-&gt;4)-O-6-P-alpha-D-Man}-L-Thr-[protein] + adenosine 3',5'-bisphosphate + H(+). It catalyses the reaction 17beta-estradiol 3-O-(beta-D-glucuronate) + 3'-phosphoadenylyl sulfate = 17beta-estradiol 3-O-(3-sulfo-beta-D-glucuronate) + adenosine 3',5'-bisphosphate + H(+). It carries out the reaction 17beta-estradiol 3-O-(beta-D-glucuronate) 17-sulfate + 3'-phosphoadenylyl sulfate = 17beta-estradiol 3-O-(3-sulfo-beta-D-glucuronate) 17-sulfate + adenosine 3',5'-bisphosphate + H(+). The catalysed reaction is 17beta-estradiol 17-O-(beta-D-glucuronate) + 3'-phosphoadenylyl sulfate = 17beta-estradiol 17-O-(3-sulfo-beta-D-glucuronate) + adenosine 3',5'-bisphosphate + H(+). The enzyme catalyses 16alpha,17beta-estriol 3-O-(beta-D-glucuronate) + 3'-phosphoadenylyl sulfate = 16alpha,17beta-estriol 3-O-(3-sulfo-beta-D-glucuronate) + adenosine 3',5'-bisphosphate + H(+). It catalyses the reaction 16alpha,17beta-estriol 16-O-(beta-D-glucuronate) + 3'-phosphoadenylyl sulfate = 16alpha,17beta-estriol 16-O-(3-sulfo-beta-D-glucuronate) + adenosine 3',5'-bisphosphate + H(+). It carries out the reaction 16alpha,17beta-estriol 17-O-(beta-D-glucuronate) + 3'-phosphoadenylyl sulfate = 16alpha,17beta-estriol 17-O-(3-sulfo-beta-D-glucuronate) + adenosine 3',5'-bisphosphate + H(+). The catalysed reaction is estrone 3-O-(beta-D-glucuronate) + 3'-phosphoadenylyl sulfate = estrone 3-O-(3-sulfo-beta-D-glucuronate) + adenosine 3',5'-bisphosphate + H(+). The enzyme catalyses 3alpha,20alpha-dihydroxy-5beta-pregnane 3-O-(beta-D-glucuronate) + 3'-phosphoadenylyl sulfate = 3alpha,20alpha-dihydroxy-5beta-pregnane 3-O-(3-sulfo-beta-D-glucuronate) + adenosine 3',5'-bisphosphate + H(+). It catalyses the reaction testosterone 17-O-(beta-D-glucuronate) + 3'-phosphoadenylyl sulfate = testosterone 17-O-(3-sulfo-beta-D-glucuronate) + adenosine 3',5'-bisphosphate + H(+). It carries out the reaction 3beta-androst-5-en-17-one 3-O-(beta-D-glucuronate) + 3'-phosphoadenylyl sulfate = 3beta-androst-5-en-17-one 3-O-(3-sulfo-beta-D-glucuronate) + adenosine 3',5'-bisphosphate + H(+). The catalysed reaction is 3alpha,17alpha-dihydroxy-5beta-androstane-11-one-17beta-carboxylate 3-O-(beta-D-glucuronate) + 3'-phosphoadenylyl sulfate = 3alpha,17alpha-dihydroxy-5beta-androstane-11-one-17beta-carboxylate 3-O-(3-sulfo-beta-D-glucuronate) + adenosine 3',5'-bisphosphate + H(+). The enzyme catalyses 3alpha-hydroxyetiocholan-17-one 3-O-(beta-D-glucuronate) + 3'-phosphoadenylyl sulfate = 3alpha-hydroxyetiocholan-17-one 3-O-(3-sulfo-beta-D-glucuronate) + adenosine 3',5'-bisphosphate + H(+). It participates in steroid metabolism. Its pathway is protein modification; carbohydrate sulfation. Functionally, catalyzes the transfer of sulfate from 3'-phosphoadenylyl sulfate (PAPS) to position 3 of terminal glucuronic acid of both protein- and lipid-linked oligosaccharides. Participates in biosynthesis of HNK-1 carbohydrate structure 3-O-sulfo-beta-D-GlcA-(1-&gt;3)-beta-D-Gal-(1-&gt;4)-D-GlcNAc-R, a sulfated glucuronyl-lactosaminyl residue carried by many neural recognition molecules, which is involved in cell interactions during ontogenetic development and in synaptic plasticity in the adult. May be indirectly involved in synapse plasticity of the hippocampus, via its role in HNK-1 biosynthesis. Sulfates terminal glucuronyl residue of the laminin globular (LG)-domain binding epitope on DAG1/alpha-dystroglycan and prevents further polymerization by LARGE1 glycosyltransferase. Likely defines the chain length of LG epitope, conferring binding specificity to extracellular matrix components. Plays a role in down-regulating the steroid hormones. Sulfates glucuronidated estrogens and androgens with an impact in hormone cycle and fertility. Has a preference for glucuronyl moiety at the 3-hydroxyl group of a sterol ring rather than the 17-hydroxyl group, showing high catalytic efficiency for 17beta-estradiol 3-O-(beta-D-glucuronate) and dehydroepiandrosterone 3-O-(beta-D-glucuronate) hormones. This Rattus norvegicus (Rat) protein is Carbohydrate sulfotransferase 10 (Chst10).